An 854-amino-acid chain; its full sequence is V-type proton ATPase 116 kDa subunit a 2 (854 aa).

Residues methionine 1–glutamate 393 lie on the Cytoplasmic side of the membrane. Residues valine 394–phenylalanine 412 form a helical membrane-spanning segment. Over glycine 413–aspartate 414 the chain is Vacuolar. A helical transmembrane segment spans residues phenylalanine 415–asparagine 431. Residues glutamate 432–arginine 445 lie on the Cytoplasmic side of the membrane. Residues methionine 446–serine 475 traverse the membrane as a helical segment. Over valine 476 to serine 549 the chain is Vacuolar. Residues phenylalanine 550–leucine 569 traverse the membrane as a helical segment. Over glycine 570 to serine 587 the chain is Cytoplasmic. A helical membrane pass occupies residues isoleucine 588–lysine 608. Over tryptophan 609–leucine 651 the chain is Vacuolar. A helical membrane pass occupies residues leucine 652–leucine 671. The Cytoplasmic segment spans residues leucine 672–serine 739. 2 positions are modified to phosphoserine: serine 695 and serine 700. The helical transmembrane segment at isoleucine 740–alanine 764 threads the bilayer. At glutamine 765–tyrosine 785 the chain is on the vacuolar side. The helical transmembrane segment at glycine 786 to glutamate 824 threads the bilayer. At phenylalanine 825 to alanine 854 the chain is on the cytoplasmic side.

The protein belongs to the V-ATPase 116 kDa subunit family. V-ATPase is a heteromultimeric enzyme made up of two complexes: the ATP-hydrolytic V1 complex and the proton translocation V0 complex. The V1 complex consists of three catalytic AB heterodimers that form a heterohexamer, three peripheral stalks each consisting of EG heterodimers, one central rotor including subunits D and F, and the regulatory subunits C and H. The proton translocation complex V0 consists of the proton transport subunit a, a ring of proteolipid subunits c9c'', rotary subunit d, subunits e and f, and the accessory subunits ATP6AP1/Ac45 and ATP6AP2/PRR. Directly interacts with PSCD2 through its N-terminal cytosolic tail in an intra-endosomal acidification-dependent manner. Disruption of this interaction results in the inhibition of endocytosis. Interacts with SPAAR. As to expression, highly expressed in lung, kidney and spleen.

The protein localises to the cell membrane. It localises to the endosome membrane. Its function is as follows. Subunit of the V0 complex of vacuolar(H+)-ATPase (V-ATPase), a multisubunit enzyme composed of a peripheral complex (V1) that hydrolyzes ATP and a membrane integral complex (V0) that translocates protons. V-ATPase is responsible for acidifying and maintaining the pH of intracellular compartments and in some cell types, is targeted to the plasma membrane, where it is responsible for acidifying the extracellular environment. Essential component of the endosomal pH-sensing machinery. May play a role in maintaining the Golgi functions, such as glycosylation maturation, by controlling the Golgi pH. In aerobic conditions, involved in intracellular iron homeostasis, thus triggering the activity of Fe(2+) prolyl hydroxylase (PHD) enzymes, and leading to HIF1A hydroxylation and subsequent proteasomal degradation. The chain is V-type proton ATPase 116 kDa subunit a 2 (ATP6V0A2) from Bos taurus (Bovine).